The sequence spans 348 residues: MEENKQKALSAALSQIERQFGKGSVMRMGDSTVSRDIEAISTGSLGLDIALGIGGLPKGRIVEIYGPESSGKTTLTLQVIAECQKMGGTAAFIDAEHALDPSYAQKLGVKVDELLVSQPDTGEQALEITDMLVRSAAVDVVIIDSVAALTPKAEIEGEMGDSHVGLQARLMSQALRKLTANIKRSNTLVIFINQIRMKIGVMFGSPETTTGGNALKFYASVRLDIRRIGSIKKGEEILGSETRVKVVKNKVAPPFKMTEFDILYNEGISRESEIINLGVQLNLIEKSGAWYSYKQEKIGQGKENVRLYLKENPQVAAELEQQIRTELLEKKLSVLASSSEDLFETIDD.

66–73 is a binding site for ATP; the sequence is GPESSGKT.

This sequence belongs to the RecA family.

The protein resides in the cytoplasm. Its function is as follows. Can catalyze the hydrolysis of ATP in the presence of single-stranded DNA, the ATP-dependent uptake of single-stranded DNA by duplex DNA, and the ATP-dependent hybridization of homologous single-stranded DNAs. It interacts with LexA causing its activation and leading to its autocatalytic cleavage. This is Protein RecA from Legionella pneumophila (strain Paris).